The following is a 506-amino-acid chain: ATP synthase subunit alpha (506 aa).

ATP is bound at residue 170–177; that stretch reads GDRQTGKT.

Belongs to the ATPase alpha/beta chains family. F-type ATPases have 2 components, CF(1) - the catalytic core - and CF(0) - the membrane proton channel. CF(1) has five subunits: alpha(3), beta(3), gamma(1), delta(1), epsilon(1). CF(0) has four main subunits: a(1), b(1), b'(1) and c(9-12).

It is found in the cellular thylakoid membrane. It catalyses the reaction ATP + H2O + 4 H(+)(in) = ADP + phosphate + 5 H(+)(out). In terms of biological role, produces ATP from ADP in the presence of a proton gradient across the membrane. The alpha chain is a regulatory subunit. The chain is ATP synthase subunit alpha from Synechococcus sp. (strain CC9902).